Here is a 1096-residue protein sequence, read N- to C-terminus: Centrosome-associated zinc finger protein Cp190 (1096 aa).

The interval 1 to 209 is involved in microtubule and centrosome binding; the sequence is MGEVKSVKVD…GDSSNVKQEP (209 aa). The BTB domain occupies 30–97; sequence CDLTLQFRDN…MYTGTLEFEL (68 aa). Residues 126-308 form a disordered region; that stretch reads MENVNRQQRP…PQGTQTQLEH (183 aa). 2 stretches are compositionally biased toward polar residues: residues 175-213 and 220-230; these read RANT…TSPF and YNNNKRPAQTS. 2 positions are modified to phosphoserine: S197 and S211. Residues 207-271 are nuclear localization; it reads QEPTSPFEQL…GDNDPEYDGG (65 aa). The interval 210–245 is involved in interaction with cliff; it reads TSPFEQLRKGYNNNKRPAQTSLLSPPSKKPSLEEVK. Residue T229 is modified to Phosphothreonine. A Phosphoserine modification is found at S233. Basic and acidic residues predominate over residues 239 to 252; that stretch reads PSLEEVKEFAEQQR. The centrosomal targeting M domain involved in interaction with ZIPIC stretch occupies residues 245-468; the sequence is KEFAEQQRMR…IAQGAENTTG (224 aa). Low complexity predominate over residues 292–305; sequence STSKQQSPQGTQTQ. Residues S298 and S319 each carry the phosphoserine modification. The interval 309 to 390 is involved in interaction with cliff; that stretch reads GSTTIILKQD…KPPANQSSAT (82 aa). The interval 366 to 449 is disordered; sequence NTPAAPTEKS…ANTAAAQKRR (84 aa). The interval 385-508 is centrosomal localization and interaction with microtubules; that stretch reads NQSSATTSPH…KETIDPALCE (124 aa). Residues 412–445 show a composition bias toward low complexity; the sequence is AQQKAASSQQKSGTSQTTGNQGTGANPPANTAAA. C2H2-type zinc fingers lie at residues 538–561 and 567–590; these read AECA…NEVH and QQCI…KSYH. T603 bears the Phosphothreonine mark. The span at 608 to 625 shows a compositional bias: acidic residues; sequence LGSQDEEEEAEGDEEQEP. A disordered region spans residues 608–630; sequence LGSQDEEEEAEGDEEQEPEQTGK. 3 positions are modified to phosphoserine: S610, S708, and S723. The disordered stretch occupies residues 710 to 733; sequence PEAEHVKQETDEKSLAGTEEEYDD. Positions 711–723 are enriched in basic and acidic residues; sequence EAEHVKQETDEKS. T727 carries the phosphothreonine modification. Phosphoserine is present on residues S745, S748, S757, and S760. The tract at residues 770–927 is disordered; that stretch reads LIAESEEQSN…EDSPIPHSDS (158 aa). Residues 777–799 are compositionally biased toward basic and acidic residues; the sequence is QSNKEPKSDKPRDDISEKLKELT. Over residues 802–812 the composition is skewed to acidic residues; it reads WTEDENDDDVD. The residue at position 817 (T817) is a Phosphothreonine. Composition is skewed to basic and acidic residues over residues 825-834, 849-861, 882-907, and 914-927; these read ANKDPEPTVH, KGPE…KASE, EKMD…KEAE, and EFIK…HSDS. Phosphoserine occurs at positions 920, 925, and 927. The residue at position 936 (T936) is a Phosphothreonine. At S938 the chain carries Phosphoserine. Basic and acidic residues-rich tracts occupy residues 960 to 973 and 1011 to 1035; these read IAEA…KDIV and AAEK…EDKP. The tract at residues 960 to 1096 is disordered; it reads IAEAEKPDQE…GVSAAAKEEL (137 aa). Phosphoserine occurs at positions 1071 and 1074. A compositionally biased stretch (acidic residues) spans 1076 to 1086; the sequence is WGDDDEDEDEN.

As to quaternary structure, homodimerizes via the N-terminal BTB domain. Component of the gypsy chromatin insulator complex, composed of Cp190, mod(mdg4) and su(Hw). The gypsy chromatin insulator complex interacts with Topors via mod(mdg4) and su(Hw). Interacts with Cp60. Interacts with inv. Interacts with Nup98. Interacts (via BTB domain) with pita (via region between the ZAD domain and the first zinc finger domain); the interaction is direct. Interacts with ZIPIC (via region between the ZAD domain and the first zinc finger domain); the interaction is direct. Interacts (via regions between the BTB domain and first zinc finger domain) with cliff (via regions flanking MADF domain 1); the interaction is probably direct. Associates (via N-terminus) with microtubules; the interaction is direct, is enhanced by dimerization and involves multiple regions within the N-terminus. Microtubule association is enriched at growing plus ends. Expressed in spermatids but not in mature spermatozoa. Localizes within the spermatids to a sheath of microtubules around the nucleus and to microtubules within the tail.

Its subcellular location is the nucleus. It localises to the cytoplasm. The protein resides in the cytoskeleton. The protein localises to the microtubule organizing center. It is found in the centrosome. Its subcellular location is the chromosome. It localises to the nucleoplasm. Plays a central role in chromatin domain organization and boundary function through recruitment by a range of insulator DNA-binding proteins, including ZIPIC, pita, CTCF, su(Hw), cliff and others. Together with pita and CTCF cooperatively binds to and regulates the activity of the Miscadastral pigmentation (MCP) insulator. Cooperatively recruited to the front-ultraabdominal (Fub) boundary by pita, su(Hw) and cliff. Recruitment of Cp190 together with Chro/chromator induces chromatin decondensation. Component of the gypsy chromatin insulator complex which is required for the function of the gypsy chromatin insulator and other endogenous chromatin insulators. Chromatin insulators are regulatory elements that establish independent domains of transcriptional activity within eukaryotic genomes. Insulators have two defining properties; they can block the communication between an enhancer and a promoter when placed between them and can also buffer transgenes from position effect variegation (PEV). Insulators are proposed to structure the chromatin fiber into independent domains of differing transcriptional potential by promoting the formation of distinct chromatin loops to form topologically associating domains (TADs). This chromatin looping may involve the formation of insulator bodies, where homotypic interactions between individual subunits of the insulator complex could promote the clustering of widely spaced insulators at the nuclear periphery. Within the gypsy insulator complex, this protein may directly bind to insulator DNA at sites distinct from those recognized by su(Hw). Required during embryogenesis for axial expansion, an actin/myosin dependent process that distributes the dividing nuclei along the anterior-posterior axis of the syncytial embryo. Associates with centrosomes and interphase microtubules during mitosis, and recruits CP60; may have a role in maintaining centrosome and spindle integrity. The protein is Centrosome-associated zinc finger protein Cp190 of Drosophila melanogaster (Fruit fly).